The sequence spans 610 residues: UvrABC system protein C (610 aa).

Residues 16 to 94 form the GIY-YIG domain; that stretch reads SQPGVYRMYD…IKLYQPRYNV (79 aa). Positions 204-239 constitute a UVR domain; the sequence is QQVLHQLIERMENASKALNFEEAARIRDQIQAVRRV.

This sequence belongs to the UvrC family. In terms of assembly, interacts with UvrB in an incision complex.

It is found in the cytoplasm. In terms of biological role, the UvrABC repair system catalyzes the recognition and processing of DNA lesions. UvrC both incises the 5' and 3' sides of the lesion. The N-terminal half is responsible for the 3' incision and the C-terminal half is responsible for the 5' incision. This Serratia proteamaculans (strain 568) protein is UvrABC system protein C.